The primary structure comprises 1052 residues: SE-cephalotoxin (1052 aa).

The N-terminal stretch at Met-1–Ala-21 is a signal peptide. Positions Ala-22–Thr-29 are excised as a propeptide. The N-linked (GlcNAc...) asparagine glycan is linked to Asn-41. Positions Thr-130–Glu-194 form a coiled coil. N-linked (GlcNAc...) asparagine glycosylation occurs at Asn-353. An EGF-like domain is found at Pro-460–Gln-497. 3 disulfides stabilise this stretch: Cys-464-Cys-474, Cys-468-Cys-485, and Cys-487-Cys-496. Residues Asn-576 and Asn-715 are each glycosylated (N-linked (GlcNAc...) asparagine). The region spanning Thr-709–Ser-769 is the Sushi domain. 7 disulfide bridges follow: Cys-711-Cys-752, Cys-739-Cys-767, Cys-780-Cys-814, Cys-784-Cys-820, Cys-795-Cys-804, Cys-829-Cys-847, and Cys-841-Cys-858. The TSP type-1 domain occupies Glu-768 to Gln-821. Asn-786 carries N-linked (GlcNAc...) asparagine glycosylation. Residues Cys-819–Lys-859 form the LDL-receptor class A domain.

As to quaternary structure, monomer. Expressed by the salivary gland.

It localises to the secreted. The chain is SE-cephalotoxin from Acanthosepion esculentum (Golden cuttlefish).